The sequence spans 464 residues: Glycine receptor subunit alpha-3 (464 aa).

The N-terminal stretch at 1 to 33 (MAHVRHFRTLLSGFYFWEAALLLSLVATKETNS) is a signal peptide. The Extracellular segment spans residues 34–255 (ARSRSAPMSP…RFHLERQMGY (222 aa)). The N-linked (GlcNAc...) asparagine glycan is linked to N71. A disulfide bridge connects residues C171 and C185. Residues E225 and D227 each contribute to the Zn(2+) site. A disulfide bridge connects residues C231 and C242. 235–240 (YNTGKF) serves as a coordination point for strychnine. H248 contacts Zn(2+). A helical transmembrane segment spans residues 256–277 (YLIQMYIPSLLIVILSWVSFWI). At 278–282 (NMDAA) the chain is on the cytoplasmic side. A helical membrane pass occupies residues 283–303 (PARVALGITTVLTMTTQSSGS). Residues 304 to 314 (RASLPKVSYVK) are Extracellular-facing. The helical transmembrane segment at 315-335 (AIDIWMAVCLLFVFSALLEYA) threads the bilayer. At 336–430 (AVNFVSRQHK…FIDRAKKIDT (95 aa)) the chain is on the cytoplasmic side. S370 carries the post-translational modification Phosphoserine. The residue at position 379 (S379) is a Phosphoserine; by PKA. Residues 431–451 (ISRACFPLAFLIFNIFYWVIY) form a helical membrane-spanning segment. The Extracellular segment spans residues 452–464 (KILRHEDIHHQQD).

The protein belongs to the ligand-gated ion channel (TC 1.A.9) family. Glycine receptor (TC 1.A.9.3) subfamily. GLRA3 sub-subfamily. In terms of assembly, homopentamer (in vitro). Heteropentamer composed of GLRA3 and GLRB. Both homopentamers and heteropentamers form functional ion channels, but their characteristics are subtly different. Post-translationally, phosphorylated by PKA; this causes down-regulation of channel activity.

Its subcellular location is the postsynaptic cell membrane. It localises to the perikaryon. The protein localises to the cell projection. The protein resides in the dendrite. It is found in the synapse. Its subcellular location is the cell membrane. The catalysed reaction is chloride(in) = chloride(out). Low levels of Zn(2+) ions (1 uM) increase glycine sensitivity and decrease the glycine concentration required for half-maximal channel activity. Channel activity is strongly enhanced by ethanol. Inhibited by picrotoxin. Inhibited by prostaglandin E2, probably via PKA-mediated phosphorylation at Ser-379. Functionally, glycine receptors are ligand-gated chloride channels. Channel opening is triggered by extracellular glycine. Channel characteristics depend on the subunit composition; heteropentameric channels display faster channel closure. Plays an important role in the down-regulation of neuronal excitability. Contributes to the generation of inhibitory postsynaptic currents. Contributes to increased pain perception in response to increased prostaglandin E2 levels. Plays a role in cellular responses to ethanol. This is Glycine receptor subunit alpha-3 (Glra3) from Rattus norvegicus (Rat).